The chain runs to 134 residues: uncharacterized protein (134 aa).

Residues 110–130 (SLGVLTDILFLVLYSLLIHLS) traverse the membrane as a helical segment.

The protein localises to the membrane. This is an uncharacterized protein from Saccharomyces cerevisiae (strain ATCC 204508 / S288c) (Baker's yeast).